Consider the following 163-residue polypeptide: Phosphopantetheine adenylyltransferase (163 aa).

Substrate is bound at residue S9. ATP is bound by residues 9 to 10 (SF) and H17. Positions 41, 73, and 87 each coordinate substrate. Residues 88–90 (GLR), E98, and 123–129 (YAYFSSS) each bind ATP.

It belongs to the bacterial CoaD family. In terms of assembly, homohexamer. Mg(2+) serves as cofactor.

It is found in the cytoplasm. The enzyme catalyses (R)-4'-phosphopantetheine + ATP + H(+) = 3'-dephospho-CoA + diphosphate. It participates in cofactor biosynthesis; coenzyme A biosynthesis; CoA from (R)-pantothenate: step 4/5. In terms of biological role, reversibly transfers an adenylyl group from ATP to 4'-phosphopantetheine, yielding dephospho-CoA (dPCoA) and pyrophosphate. In Lactiplantibacillus plantarum (strain ATCC BAA-793 / NCIMB 8826 / WCFS1) (Lactobacillus plantarum), this protein is Phosphopantetheine adenylyltransferase.